Reading from the N-terminus, the 386-residue chain is Skeletal aspartic acid-rich protein 1 (386 aa).

Residues 1-24 (MAFVSCFHLRLLFLCLALFMAAEC) form the signal peptide. 2 disordered regions span residues 33-145 (VDSD…PFSL) and 244-291 (EVTD…DCPH). Positions 63–107 (YDASDDNDNDNDDDDNNDNDNDNDDDNDVDRDNDNDDDDFDDSND) are enriched in acidic residues. 2 stretches are compositionally biased toward basic and acidic residues: residues 133 to 142 (HSVESFEDRP) and 244 to 265 (EVTDEERKSQNKPAVCKDKDTP). Positions 266 to 288 (DTDSDPDDSSDNANDGDDDDDDD) are enriched in acidic residues.

As to expression, component of the acid-insoluble and acid-soluble organic matrix of the aragonitic skeleton (at protein level).

Its subcellular location is the secreted. In Acropora millepora (Staghorn coral), this protein is Skeletal aspartic acid-rich protein 1.